Reading from the N-terminus, the 297-residue chain is Methionyl-tRNA formyltransferase (297 aa).

Residues 31–52 (QPPRAAGRGQKPRPSPVHRAAE) are disordered. 108-111 (SLLP) contributes to the (6S)-5,6,7,8-tetrahydrofolate binding site.

It belongs to the Fmt family.

It catalyses the reaction L-methionyl-tRNA(fMet) + (6R)-10-formyltetrahydrofolate = N-formyl-L-methionyl-tRNA(fMet) + (6S)-5,6,7,8-tetrahydrofolate + H(+). Functionally, attaches a formyl group to the free amino group of methionyl-tRNA(fMet). The formyl group appears to play a dual role in the initiator identity of N-formylmethionyl-tRNA by promoting its recognition by IF2 and preventing the misappropriation of this tRNA by the elongation apparatus. The protein is Methionyl-tRNA formyltransferase of Paracoccus denitrificans (strain Pd 1222).